Consider the following 156-residue polypeptide: 3-hydroxyacyl-[acyl-carrier-protein] dehydratase FabZ (156 aa).

His-57 is a catalytic residue.

The protein belongs to the thioester dehydratase family. FabZ subfamily.

It localises to the cytoplasm. The catalysed reaction is a (3R)-hydroxyacyl-[ACP] = a (2E)-enoyl-[ACP] + H2O. Functionally, involved in unsaturated fatty acids biosynthesis. Catalyzes the dehydration of short chain beta-hydroxyacyl-ACPs and long chain saturated and unsaturated beta-hydroxyacyl-ACPs. The chain is 3-hydroxyacyl-[acyl-carrier-protein] dehydratase FabZ from Anaeromyxobacter sp. (strain K).